The primary structure comprises 198 residues: MFFWLMCYLVDVWLISASDVGHCPDPLLVTDEFSSLEPVNVNDTFMFKCNEHCIFKGSNWSQCRENHTRVTHSPVSKSRDCGPPETPTHGYFEGRDFKSGSTITYYCEARYRLVGTQHQQCIDGEWTSAPPICELIQEAPKPAELELEKAFLAFQESKELCKAIKKFTQRLKKSDLTMEKVKYSLERKKAKLKAKMLL.

The signal sequence occupies residues 1-17 (MFFWLMCYLVDVWLISA). Positions 22 to 77 (HCPDPLLVTDEFSSLEPVNVNDTFMFKCNEHCIFKGSNWSQCRENHTRVTHSPVSK) constitute a Sushi 1; atypical; lacks a Cys domain. Asn-42, Asn-59, and Asn-66 each carry an N-linked (GlcNAc...) asparagine glycan. Residues 79 to 135 (RDCGPPETPTHGYFEGRDFKSGSTITYYCEARYRLVGTQHQQCIDGEWTSAPPICEL) enclose the Sushi 2 domain. 2 disulfide bridges follow: Cys-81-Cys-121 and Cys-107-Cys-133.

As to quaternary structure, disulfide-linked complex of alpha and beta chains.

Its subcellular location is the secreted. Controls the classical pathway of complement activation. It binds as a cofactor to C3b/C4b inactivator (C3bINA), which then hydrolyzes the complement fragment C4b. It also accelerates the degradation of the C4bC2a complex (C3 convertase) by dissociating the complement fragment C2a. It also interacts with serum amyloid P component. This is C4b-binding protein beta chain (C4BPB) from Bos taurus (Bovine).